We begin with the raw amino-acid sequence, 229 residues long: 2-C-methyl-D-erythritol 4-phosphate cytidylyltransferase (229 aa).

Belongs to the IspD/TarI cytidylyltransferase family. IspD subfamily.

It catalyses the reaction 2-C-methyl-D-erythritol 4-phosphate + CTP + H(+) = 4-CDP-2-C-methyl-D-erythritol + diphosphate. It participates in isoprenoid biosynthesis; isopentenyl diphosphate biosynthesis via DXP pathway; isopentenyl diphosphate from 1-deoxy-D-xylulose 5-phosphate: step 2/6. Catalyzes the formation of 4-diphosphocytidyl-2-C-methyl-D-erythritol from CTP and 2-C-methyl-D-erythritol 4-phosphate (MEP). The chain is 2-C-methyl-D-erythritol 4-phosphate cytidylyltransferase from Shouchella clausii (strain KSM-K16) (Alkalihalobacillus clausii).